Here is a 110-residue protein sequence, read N- to C-terminus: MNYANFGLDFLNSVANAVVEGKKLDLASKGLQLKSRALDTERAFNYDRLAFEKHKFETNNDLKIYGDAMRISALRAAGLRINPYSNGRQIYQDEADLANLHSYYSFYKTD.

It belongs to the vesivirus VP2 protein family. In terms of assembly, homooligomer. The portal-like structure consists in 12 copies of VP2. Interacts with capsid protein VP1.

The protein localises to the virion. It is found in the host cytoplasm. Functionally, minor structural protein that forms a portal-like structure at a unique three-fold axis of symmetry, following binding to the host receptor. The channel formed by VP2 may allow the delivery of the viral genome through the host endosomal membrane. In Otariidae (fur seals &amp; sea lions), this protein is Minor capsid protein VP2.